The sequence spans 228 residues: Ribosomal RNA large subunit methyltransferase E (228 aa).

The S-adenosyl-L-methionine site is built by G76, W78, D99, D115, and D139. K179 serves as the catalytic Proton acceptor.

It belongs to the class I-like SAM-binding methyltransferase superfamily. RNA methyltransferase RlmE family.

Its subcellular location is the cytoplasm. The catalysed reaction is uridine(2552) in 23S rRNA + S-adenosyl-L-methionine = 2'-O-methyluridine(2552) in 23S rRNA + S-adenosyl-L-homocysteine + H(+). Specifically methylates the uridine in position 2552 of 23S rRNA at the 2'-O position of the ribose in the fully assembled 50S ribosomal subunit. The protein is Ribosomal RNA large subunit methyltransferase E of Bradyrhizobium diazoefficiens (strain JCM 10833 / BCRC 13528 / IAM 13628 / NBRC 14792 / USDA 110).